A 508-amino-acid chain; its full sequence is Light-independent protochlorophyllide reductase subunit B (508 aa).

D36 is a [4Fe-4S] cluster binding site. Residue D294 is the Proton donor of the active site. Substrate is bound at residue 429 to 430 (GM).

It belongs to the ChlB/BchB/BchZ family. As to quaternary structure, protochlorophyllide reductase is composed of three subunits; ChlL, ChlN and ChlB. Forms a heterotetramer of two ChlB and two ChlN subunits. It depends on [4Fe-4S] cluster as a cofactor.

It catalyses the reaction chlorophyllide a + oxidized 2[4Fe-4S]-[ferredoxin] + 2 ADP + 2 phosphate = protochlorophyllide a + reduced 2[4Fe-4S]-[ferredoxin] + 2 ATP + 2 H2O. The protein operates within porphyrin-containing compound metabolism; chlorophyll biosynthesis (light-independent). In terms of biological role, component of the dark-operative protochlorophyllide reductase (DPOR) that uses Mg-ATP and reduced ferredoxin to reduce ring D of protochlorophyllide (Pchlide) to form chlorophyllide a (Chlide). This reaction is light-independent. The NB-protein (ChlN-ChlB) is the catalytic component of the complex. The polypeptide is Light-independent protochlorophyllide reductase subunit B (Trichormus variabilis (strain ATCC 29413 / PCC 7937) (Anabaena variabilis)).